Reading from the N-terminus, the 493-residue chain is 3-octaprenyl-4-hydroxybenzoate carboxy-lyase (493 aa).

A Mn(2+)-binding site is contributed by N172. Residues 175 to 177 (IYR), 189 to 191 (RWL), and 194 to 195 (RG) each bind prenylated FMN. E238 lines the Mn(2+) pocket. The active-site Proton donor is the D287.

The protein belongs to the UbiD family. Homohexamer. Prenylated FMN serves as cofactor. The cofactor is Mn(2+).

The protein localises to the cell membrane. The catalysed reaction is a 4-hydroxy-3-(all-trans-polyprenyl)benzoate + H(+) = a 2-(all-trans-polyprenyl)phenol + CO2. Its pathway is cofactor biosynthesis; ubiquinone biosynthesis. Its function is as follows. Catalyzes the decarboxylation of 3-octaprenyl-4-hydroxy benzoate to 2-octaprenylphenol, an intermediate step in ubiquinone biosynthesis. This chain is 3-octaprenyl-4-hydroxybenzoate carboxy-lyase, found in Shewanella sediminis (strain HAW-EB3).